A 169-amino-acid polypeptide reads, in one-letter code: Large ribosomal subunit protein uL15 (169 aa).

A compositionally biased stretch (basic and acidic residues) spans 1–13 (MKLNEIRDNEGAT). Positions 1–40 (MKLNEIRDNEGATKNRMRVGRGIGSGKGKTGGRGVKGQKA) are disordered. Residues 21–35 (RGIGSGKGKTGGRGV) are compositionally biased toward gly residues.

Belongs to the universal ribosomal protein uL15 family. In terms of assembly, part of the 50S ribosomal subunit.

Its function is as follows. Binds to the 23S rRNA. This is Large ribosomal subunit protein uL15 from Methylorubrum populi (strain ATCC BAA-705 / NCIMB 13946 / BJ001) (Methylobacterium populi).